The chain runs to 168 residues: Photosystem I assembly protein Ycf3 (168 aa).

TPR repeat units lie at residues 35–68, 72–105, and 120–153; these read AFTY…EMDP, SYIL…NPFL, and GEQA…TPGN.

This sequence belongs to the Ycf3 family.

The protein resides in the plastid. The protein localises to the chloroplast thylakoid membrane. Essential for the assembly of the photosystem I (PSI) complex. May act as a chaperone-like factor to guide the assembly of the PSI subunits. The protein is Photosystem I assembly protein Ycf3 of Plantago lanceolata (English plantain).